Here is a 634-residue protein sequence, read N- to C-terminus: MGKVIGIDLGTTNSCVAVMEGGEPVVIANAEGSRTTPSMVAFTENGERLVGQQAKRQAVTNPENTLFAIKRLIGRKFDSDAVRRDIQISPFEIVKADNGDAWVDVRDKKYSPPEISAMILQKMKQTAEDYLGEKVTDAVITVPAYFNDSQRQATKDAGKISGLNVLRIINEPTAASLAYGLDKKSEEKIAVFDLGGGTFDISILELGDGVFEVKSTNGDTFLGGEDFDQHIMDYVADEFKKEQGIDLRNDKMALQRLKEACEKAKCELSTSMETDINLPFITADQSGPKHLNLRLTRSKLESICSSLLAKLVEPCRMALKDAGLSASDVDEVLLVGGMTRMPAVQAKVQEIFGKTPNKGVNPDEVVAIGAAIQGGVLKGEVKDVLLLDVTPLSLGIETLGSIMTKLIEKNTTIPCKKSQIFSTAADNQPAVSVHVLQGEREMAGDNKTIGRFELVGIPPAPRGVPQVEVTFDIDANGILHVSAKDLGTGKEQSIRITASSGLSDEEIDKMVKDAEAHSSEDKKKREIIEARNQADGLAYSTEKSLKEHGDKIDEETRNNIQTALDALKAAMEGDDPEDIRQKSEALATASHKLAEAVYKQTQEGAEAASEAGEQSAGDEGVVDAEFEEVDEQNK.

Thr198 is subject to Phosphothreonine; by autocatalysis. The segment at 599-634 (KQTQEGAEAASEAGEQSAGDEGVVDAEFEEVDEQNK) is disordered. The segment covering 602–619 (QEGAEAASEAGEQSAGDE) has biased composition (low complexity). The span at 620 to 634 (GVVDAEFEEVDEQNK) shows a compositional bias: acidic residues.

This sequence belongs to the heat shock protein 70 family.

In terms of biological role, acts as a chaperone. The chain is Chaperone protein DnaK from Syntrophotalea carbinolica (strain DSM 2380 / NBRC 103641 / GraBd1) (Pelobacter carbinolicus).